A 144-amino-acid polypeptide reads, in one-letter code: MYLNTISPMKKSNHSSKRKGRGIGSGKGKTSGRGHKGQRSRSGGKVRRGFEGGQMPLYRRLPKFGHNKSKKSFFKKEIKLSEFMKIKDSFIDLIVLKKNKIINSKIKIVKIIFSKNFNKKINIKNLKVSKNAKKEIEFFGGTIN.

Positions Met-1–Gly-52 are disordered. Basic residues-rich tracts occupy residues Lys-11 to Arg-21 and Thr-30 to Arg-47.

The protein belongs to the universal ribosomal protein uL15 family. As to quaternary structure, part of the 50S ribosomal subunit.

In terms of biological role, binds to the 23S rRNA. The protein is Large ribosomal subunit protein uL15 of Wigglesworthia glossinidia brevipalpis.